The primary structure comprises 147 residues: Large ribosomal subunit protein uL15 (147 aa).

Positions 1–13 are enriched in basic and acidic residues; that stretch reads MELHSLKAAEGSR. Residues 1–57 are disordered; sequence MELHSLKAAEGSRKVRNRVGRGTSSGNGKTSGRGQKGQKSRSGGGVRPGFEGGQTEL. Composition is skewed to gly residues over residues 23-35 and 42-52; these read TSSG…GRGQ and SGGGVRPGFEG.

It belongs to the universal ribosomal protein uL15 family. In terms of assembly, part of the 50S ribosomal subunit.

Binds to the 23S rRNA. The sequence is that of Large ribosomal subunit protein uL15 from Lactococcus lactis subsp. cremoris (strain MG1363).